Consider the following 181-residue polypeptide: ADP-ribosylation factor 1 (181 aa).

Glycine 2 carries the N-myristoyl glycine lipid modification. Residues 3–16 (NMFANLFKGLFGKK) form an important for the stable binding to the membranes region. Residues 24-32 (GLDAAGKTT), 126-129 (NKQD), and alanine 160 contribute to the GTP site.

It belongs to the small GTPase superfamily. Arf family.

It is found in the golgi apparatus membrane. The catalysed reaction is GTP + H2O = GDP + phosphate + H(+). With respect to regulation, alternates between an inactive GDP-bound form and an active GTP-bound form. Activated by a guanine nucleotide-exchange factor (GEF) and inactivated by GTPase-activating protein (GAP). Small GTPase involved in protein trafficking between different compartments. Modulates vesicle budding and uncoating within the Golgi complex. In its GTP-bound form, triggers the recruitment of coatomer proteins to the Golgi membrane. The hydrolysis of ARF1-bound GTP, which is mediated by ARFGAPs proteins, is required for dissociation of coat proteins from Golgi membranes and vesicles. The polypeptide is ADP-ribosylation factor 1 (arf1) (Xenopus laevis (African clawed frog)).